The following is a 591-amino-acid chain: V-type ATP synthase alpha chain (591 aa).

233–240 (GPFGAGKT) provides a ligand contact to ATP.

Belongs to the ATPase alpha/beta chains family.

The catalysed reaction is ATP + H2O + 4 H(+)(in) = ADP + phosphate + 5 H(+)(out). Its function is as follows. Produces ATP from ADP in the presence of a proton gradient across the membrane. The V-type alpha chain is a catalytic subunit. The protein is V-type ATP synthase alpha chain of Streptococcus pyogenes serotype M28 (strain MGAS6180).